Reading from the N-terminus, the 332-residue chain is Methionine synthase (332 aa).

Residues histidine 211, cysteine 213, and cysteine 296 each coordinate Zn(2+).

Belongs to the archaeal MetE family. The cofactor is Zn(2+).

The protein operates within amino-acid biosynthesis; L-methionine biosynthesis via de novo pathway. Catalyzes the transfer of a methyl group to L-homocysteine resulting in methionine formation. The physiological methyl donor is unknown. The chain is Methionine synthase from Saccharolobus islandicus (strain L.S.2.15 / Lassen #1) (Sulfolobus islandicus).